Here is a 109-residue protein sequence, read N- to C-terminus: uncharacterized protein (109 aa).

Positions Asp-63 to Cys-109 are disordered. Composition is skewed to basic and acidic residues over residues Glu-73–Gln-87 and Gly-94–Cys-109.

This is an uncharacterized protein from Caenorhabditis elegans.